A 536-amino-acid polypeptide reads, in one-letter code: Phosphoenolpyruvate carboxykinase (ATP) (536 aa).

The substrate site is built by R61, Y195, and K201. Residues K201, H220, and 236–244 contribute to the ATP site; that span reads GLSGTGKTT. Mn(2+) contacts are provided by K201 and H220. A Mn(2+)-binding site is contributed by D257. Residues E285, R322, and T447 each contribute to the ATP site. R322 contributes to the substrate binding site.

The protein belongs to the phosphoenolpyruvate carboxykinase (ATP) family. The cofactor is Mn(2+).

The protein resides in the cytoplasm. It catalyses the reaction oxaloacetate + ATP = phosphoenolpyruvate + ADP + CO2. The protein operates within carbohydrate biosynthesis; gluconeogenesis. Involved in the gluconeogenesis. Catalyzes the conversion of oxaloacetate (OAA) to phosphoenolpyruvate (PEP) through direct phosphoryl transfer between the nucleoside triphosphate and OAA. The polypeptide is Phosphoenolpyruvate carboxykinase (ATP) (Brucella melitensis biotype 1 (strain ATCC 23456 / CCUG 17765 / NCTC 10094 / 16M)).